The sequence spans 492 residues: Bifunctional protein GlmU (492 aa).

Residues 1-241 (MTFRGDTAVV…SALVAGVNDR (241 aa)) form a pyrophosphorylase region. UDP-N-acetyl-alpha-D-glucosamine contacts are provided by residues 12–15 (LAAG), Lys-26, Gln-83, and 88–89 (GT). Asp-114 lines the Mg(2+) pocket. The UDP-N-acetyl-alpha-D-glucosamine site is built by Gly-151, Glu-166, Asn-181, and Asn-239. Asn-239 provides a ligand contact to Mg(2+). The interval 242-262 (VQLAQLGAELNRRIVAAHQMA) is linker. An N-acetyltransferase region spans residues 263-492 (GVTVIDPATT…TPPPDADQTP (230 aa)). UDP-N-acetyl-alpha-D-glucosamine-binding residues include Arg-344 and Lys-362. His-374 serves as the catalytic Proton acceptor. UDP-N-acetyl-alpha-D-glucosamine contacts are provided by Tyr-377 and Asn-388. Acetyl-CoA is bound by residues Ala-391, 397-398 (NY), and Ala-434. Residues 451–492 (GGPQRNIEDWVQQKRPGTPSAEAARKASAEQSTPPPDADQTP) are disordered. Over residues 483-492 (TPPPDADQTP) the composition is skewed to pro residues.

It in the N-terminal section; belongs to the N-acetylglucosamine-1-phosphate uridyltransferase family. The protein in the C-terminal section; belongs to the transferase hexapeptide repeat family. In terms of assembly, homotrimer. Requires Mg(2+) as cofactor.

The protein localises to the cytoplasm. It catalyses the reaction alpha-D-glucosamine 1-phosphate + acetyl-CoA = N-acetyl-alpha-D-glucosamine 1-phosphate + CoA + H(+). The enzyme catalyses N-acetyl-alpha-D-glucosamine 1-phosphate + UTP + H(+) = UDP-N-acetyl-alpha-D-glucosamine + diphosphate. It participates in nucleotide-sugar biosynthesis; UDP-N-acetyl-alpha-D-glucosamine biosynthesis; N-acetyl-alpha-D-glucosamine 1-phosphate from alpha-D-glucosamine 6-phosphate (route II): step 2/2. The protein operates within nucleotide-sugar biosynthesis; UDP-N-acetyl-alpha-D-glucosamine biosynthesis; UDP-N-acetyl-alpha-D-glucosamine from N-acetyl-alpha-D-glucosamine 1-phosphate: step 1/1. Its pathway is bacterial outer membrane biogenesis; LPS lipid A biosynthesis. Functionally, catalyzes the last two sequential reactions in the de novo biosynthetic pathway for UDP-N-acetylglucosamine (UDP-GlcNAc). The C-terminal domain catalyzes the transfer of acetyl group from acetyl coenzyme A to glucosamine-1-phosphate (GlcN-1-P) to produce N-acetylglucosamine-1-phosphate (GlcNAc-1-P), which is converted into UDP-GlcNAc by the transfer of uridine 5-monophosphate (from uridine 5-triphosphate), a reaction catalyzed by the N-terminal domain. This is Bifunctional protein GlmU from Mycobacterium marinum (strain ATCC BAA-535 / M).